The following is a 453-amino-acid chain: Dibenzothiophene-sulfone monooxygenase (453 aa).

Positions 59, 106, 156, 160, and 231 each coordinate FMN.

This sequence belongs to the NtaA/SnaA/DszA monooxygenase family. As to quaternary structure, homodimer.

Its subcellular location is the cytoplasm. The catalysed reaction is dibenzothiophene 5,5-dioxide + FMNH2 + NADH + O2 = 2'-hydroxybiphenyl-2-sulfinate + FMN + NAD(+) + H2O + H(+). It participates in sulfur metabolism; dibenzothiophene degradation. Functionally, catalyzes the second step of the '4S' desulfurization pathway that removes covalently bound sulfur from dibenzothiophene (DBT) without breaking carbon-carbon bonds. Metabolizes DBT-sulfone (DBTO2 or DBT 5,5-dioxide) to 2-(2'-hydroxyphenyl)benzene sulphinate (HBPS). The sequence is that of Dibenzothiophene-sulfone monooxygenase from Rhodococcus erythropolis (strain XP).